Consider the following 627-residue polypeptide: tRNA uridine 5-carboxymethylaminomethyl modification enzyme MnmG (627 aa).

Residues 13–18 (GGGHAG), valine 125, and serine 180 contribute to the FAD site. An NAD(+)-binding site is contributed by 274–288 (GPRYCPSIEDKVVRF). Glutamine 371 is an FAD binding site.

It belongs to the MnmG family. In terms of assembly, homodimer. Heterotetramer of two MnmE and two MnmG subunits. The cofactor is FAD.

It localises to the cytoplasm. NAD-binding protein involved in the addition of a carboxymethylaminomethyl (cmnm) group at the wobble position (U34) of certain tRNAs, forming tRNA-cmnm(5)s(2)U34. In Francisella tularensis subsp. novicida (strain U112), this protein is tRNA uridine 5-carboxymethylaminomethyl modification enzyme MnmG.